A 506-amino-acid chain; its full sequence is Probable Xaa-Pro aminopeptidase PADG_06815 (506 aa).

Mn(2+) is bound by residues Asp285, Asp296, Glu433, and Glu471.

Belongs to the peptidase M24B family. The cofactor is Mn(2+).

It catalyses the reaction Release of any N-terminal amino acid, including proline, that is linked to proline, even from a dipeptide or tripeptide.. Functionally, catalyzes the removal of a penultimate prolyl residue from the N-termini of peptides. The sequence is that of Probable Xaa-Pro aminopeptidase PADG_06815 from Paracoccidioides brasiliensis (strain Pb18).